We begin with the raw amino-acid sequence, 351 residues long: Blue-sensitive opsin (351 aa).

At M1–I40 the chain is on the extracellular side. N21 carries N-linked (GlcNAc...) asparagine glycosylation. Residues F41 to C65 traverse the membrane as a helical segment. The Cytoplasmic segment spans residues T66–N77. Residues Y78 to F103 traverse the membrane as a helical segment. Over N104–E117 the chain is Extracellular. A disulfide bridge links C114 with C191. The chain crosses the membrane as a helical span at residues G118–F137. The Cytoplasmic portion of the chain corresponds to E138–H156. The helical transmembrane segment at A157–S180 threads the bilayer. Residues R181–S206 lie on the Extracellular side of the membrane. Residues Y207–L234 traverse the membrane as a helical segment. Residues K235–K256 are Cytoplasmic-facing. Residues M257–V280 form a helical membrane-spanning segment. The Extracellular portion of the chain corresponds to S281–D288. Residues L289–M313 form a helical membrane-spanning segment. Residue K300 is modified to N6-(retinylidene)lysine. Residues N314 to K351 lie on the Cytoplasmic side of the membrane.

It belongs to the G-protein coupled receptor 1 family. Opsin subfamily. Post-translationally, phosphorylated on some or all of the serine and threonine residues present in the C-terminal region. As to expression, the color pigments are found in the cone photoreceptor cells.

Its subcellular location is the membrane. Visual pigments are the light-absorbing molecules that mediate vision. They consist of an apoprotein, opsin, covalently linked to cis-retinal. The polypeptide is Blue-sensitive opsin (Carassius auratus (Goldfish)).